The primary structure comprises 328 residues: Tetraacyldisaccharide 4'-kinase (328 aa).

An ATP-binding site is contributed by 55 to 62 (TAGGNGKT).

It belongs to the LpxK family.

The enzyme catalyses a lipid A disaccharide + ATP = a lipid IVA + ADP + H(+). The protein operates within glycolipid biosynthesis; lipid IV(A) biosynthesis; lipid IV(A) from (3R)-3-hydroxytetradecanoyl-[acyl-carrier-protein] and UDP-N-acetyl-alpha-D-glucosamine: step 6/6. In terms of biological role, transfers the gamma-phosphate of ATP to the 4'-position of a tetraacyldisaccharide 1-phosphate intermediate (termed DS-1-P) to form tetraacyldisaccharide 1,4'-bis-phosphate (lipid IVA). This chain is Tetraacyldisaccharide 4'-kinase, found in Escherichia fergusonii (strain ATCC 35469 / DSM 13698 / CCUG 18766 / IAM 14443 / JCM 21226 / LMG 7866 / NBRC 102419 / NCTC 12128 / CDC 0568-73).